We begin with the raw amino-acid sequence, 638 residues long: DEAD-box ATP-dependent RNA helicase 52B (638 aa).

2 stretches are compositionally biased toward low complexity: residues 1–21 (MRSSWADSAANAEESAPAAAA) and 40–67 (GQAAPAAPAQAGALPSAAAAAQPSVGQP). Positions 1–129 (MRSSWADSAA…WDRRDREPDP (129 aa)) are disordered. The span at 79 to 112 (VNGGGGGGGGSVGGSRQGFGAGGRGGGGGGGGGA) shows a compositional bias: gly residues. Basic and acidic residues predominate over residues 119–128 (GWDRRDREPD). The Q motif signature appears at 169–197 (NTFAEIDLGDALNENIRRCKYVKPTPVQR). Positions 200 to 384 (IPISIAGRDL…SDFLADYIFL (185 aa)) constitute a Helicase ATP-binding domain. 213-220 (AQTGSGKT) is a binding site for ATP. The DEAD box motif lies at 328-331 (DEAD). Residues 411–562 (YLMDLLHAQR…EVPQWLERYA (152 aa)) enclose the Helicase C-terminal domain. The interval 565 to 638 (SSFGGGGGRN…GGQGFSSAWD (74 aa)) is disordered. The segment covering 567–583 (FGGGGGRNRRSGGGARF) has biased composition (gly residues). Over residues 584 to 593 (GGRDFRRDRG) the composition is skewed to basic and acidic residues. A compositionally biased stretch (gly residues) spans 594 to 632 (SGGGGYGGGGGGYGGGGYGGGGGGGGYGGGSSYGGGGQG).

Belongs to the DEAD box helicase family. DDX3/DED1 subfamily.

It catalyses the reaction ATP + H2O = ADP + phosphate + H(+). This is DEAD-box ATP-dependent RNA helicase 52B (PL10B) from Oryza sativa subsp. japonica (Rice).